The sequence spans 716 residues: Zinc finger protein on ecdysone puffs (716 aa).

Disordered stretches follow at residues 103 to 168 (PSLL…GGIR) and 182 to 208 (KNAN…ESPY). Residues 188–203 (KKKEPTPGEKKIESPT) show a composition bias toward basic and acidic residues. S201 bears the Phosphoserine mark. T203 carries the phosphothreonine modification. Residue S206 is modified to Phosphoserine. The segment at 216–240 (FYCHLCKKHMWDANSFENHIKGRTH) adopts a C2H2-type 1 zinc-finger fold. Residues 288-310 (DYCTMCDLNFHGHISTHRKSEGH) form a C2H2-type 2; atypical zinc finger. The C2H2-type 3 zinc-finger motif lies at 319-343 (PKCIECNKEFATRIDYDTHLLSAEH). Residues 350–359 (NNTKVGERKR) are compositionally biased toward basic and acidic residues. The tract at residues 350-447 (NNTKVGERKR…EEEEVALPVD (98 aa)) is disordered. Positions 379-383 (KRKKK) match the Nuclear localization signal motif. Basic and acidic residues predominate over residues 386-401 (KKEGEAADGEAKKEGA). The segment covering 405 to 414 (EGAEGDEAEG) has biased composition (acidic residues). The span at 415-431 (EEAKEGEEAADETKEGD) shows a compositional bias: basic and acidic residues. Residues 432-447 (ELNESQEEEEVALPVD) are compositionally biased toward acidic residues. The segment at 489 to 513 (YECSVCSKFFDTEVTAEIHSRTATH) adopts a C2H2-type 4 zinc-finger fold. The segment at 534 to 716 (RAAAALEENE…QRARGRYNRY (183 aa)) is disordered. The segment covering 541 to 551 (ENERKKRKVEE) has biased composition (basic and acidic residues). The short motif at 544–548 (RKKRK) is the Nuclear localization signal element. The segment covering 560–638 (AAEETTEGAE…GQEGEQEPEP (79 aa)) has biased composition (acidic residues). Over residues 639-656 (EPAPVQTPAPAEPAPPAK) the composition is skewed to pro residues. Low complexity predominate over residues 657–704 (TPAKTPTKAAAPAAVASPAAAATSADASPSPAKKATPARAAAGAKATP). Phosphoserine occurs at positions 673, 684, and 686. T692 bears the Phosphothreonine mark. Residues 707 to 716 (QRARGRYNRY) are compositionally biased toward basic residues.

It localises to the nucleus. Its subcellular location is the chromosome. In terms of biological role, may play a role in the process of early and late gene activation, or possibly in RNA processing, for a defined set of developmentally regulated loci. This is Zinc finger protein on ecdysone puffs (Pep) from Drosophila melanogaster (Fruit fly).